The sequence spans 285 residues: Inositol polyphosphate 1-phosphatase (285 aa).

Mg(2+) contacts are provided by E68, D106, L108, and D109. 1D-myo-inositol 1,4-bisphosphate contacts are provided by D109, G110, T111, S173, G195, S197, and K200. D223 contributes to the Mg(2+) binding site.

The protein belongs to the inositol monophosphatase superfamily. In terms of assembly, monomer. Requires Mg(2+) as cofactor.

It localises to the cytoplasm. The catalysed reaction is 1D-myo-inositol 1,4-bisphosphate + H2O = 1D-myo-inositol 4-phosphate + phosphate. It carries out the reaction adenosine 3',5'-bisphosphate + H2O = AMP + phosphate. Its activity is regulated as follows. Partially inhibited by Li(2+). Catalyzes the hydrolysis of the 1-position phosphate from inositol 1,4-bisphosphate. Is also able to convert 3'(2')-phosphoadenosine 5'-phosphate (PAP) to AMP but with less efficiency. The sequence is that of Inositol polyphosphate 1-phosphatase from Entamoeba histolytica (strain ATCC 30459 / HM-1:IMSS / ABRM).